The following is a 287-amino-acid chain: uncharacterized protein (287 aa).

The protein belongs to the A.longa ORF167/ORF288 family.

The protein localises to the plastid. This is an uncharacterized protein from Euglena longa (Euglenophycean alga).